Reading from the N-terminus, the 227-residue chain is uncharacterized protein (227 aa).

4 helical membrane passes run 17 to 37 (VGIK…GVFS), 79 to 99 (GFLF…IISI), 112 to 132 (LMTP…LALI), and 181 to 201 (VAVF…ILVF).

It localises to the cell membrane. This is an uncharacterized protein from Escherichia coli (strain K12).